The chain runs to 434 residues: Protein maelstrom homolog (434 aa).

Positions 4 to 73 form a DNA-binding region, HMG box; sequence RKASRNAYYF…AQGKDSGPSE (70 aa). Disordered stretches follow at residues 62–94 and 357–385; these read RAAQ…KQNV and SHFN…SGQN. Residues 357–371 show a composition bias toward polar residues; sequence SHFNSANQEQRSNTP.

Belongs to the maelstrom family. As to quaternary structure, interacts with SMARCB1, SIN3B and DDX4. Interacts with piRNA-associated proteins TDRD1, PIWIL1 and PIWIL2. Interacts with TEX19.

The protein resides in the cytoplasm. The protein localises to the nucleus. Functionally, plays a central role during spermatogenesis by repressing transposable elements and preventing their mobilization, which is essential for the germline integrity. Acts via the piRNA metabolic process, which mediates the repression of transposable elements during meiosis by forming complexes composed of piRNAs and Piwi proteins and governs the methylation and subsequent repression of transposons. Its association with piP-bodies suggests a participation in the secondary piRNAs metabolic process. Required for the localization of germ-cell factors to the meiotic nuage. This is Protein maelstrom homolog (MAEL) from Macaca fascicularis (Crab-eating macaque).